Here is a 56-residue protein sequence, read N- to C-terminus: MFFGVGHAGRAQIYDKTSEKRLKHAFKPKVTDEAGGWHGVCRAELRVYAVLYLHRA.

This is an uncharacterized protein from Bacillus subtilis (strain 168).